The sequence spans 2768 residues: Thyroglobulin (2768 aa).

The N-terminal stretch at 1–19 (MALVLEIFTLLASICWVSA) is a signal peptide. The residue at position 24 (tyrosine 24) is an Iodotyrosine; alternate. The residue at position 24 (tyrosine 24) is a Sulfotyrosine; alternate. Thyroxine; alternate is present on tyrosine 24. Tyrosine 24 is modified (triiodothyronine; alternate). 4 consecutive Thyroglobulin type-1 domains span residues 31–92 (LRPC…PVAC), 93–160 (LSFC…PKRC), 161–297 (PRSC…RFRC), and 298–358 (PTKC…PPSC). 18 disulfides stabilise this stretch: cysteine 34–cysteine 52, cysteine 63–cysteine 70, cysteine 72–cysteine 92, cysteine 96–cysteine 120, cysteine 131–cysteine 138, cysteine 140–cysteine 160, cysteine 164–cysteine 183, cysteine 194–cysteine 235, cysteine 237–cysteine 297, cysteine 301–cysteine 319, cysteine 330–cysteine 336, cysteine 338–cysteine 358, cysteine 364–cysteine 620, cysteine 408–cysteine 608, cysteine 631–cysteine 636, cysteine 638–cysteine 658, cysteine 662–cysteine 687, and cysteine 698–cysteine 703. N-linked (GlcNAc...) asparagine glycosylation occurs at asparagine 76. The residue at position 108 (tyrosine 108) is an Iodotyrosine. Asparagine 110 is a glycosylation site (N-linked (GlcNAc...) asparagine). At tyrosine 149 the chain carries Iodotyrosine; alternate. Tyrosine 149 is modified (diiodotyrosine; alternate). A glycan (N-linked (GlcNAc...) asparagine) is linked at asparagine 198. Tyrosine 234 and tyrosine 258 each carry iodotyrosine. N-linked (GlcNAc...) asparagine glycosylation is found at asparagine 484 and asparagine 529. Residues 521 to 545 (PLSVGLDSNSSTGTPEAAKKDGTMN) form a disordered region. Thyroglobulin type-1 domains lie at 605–658 (SQTC…QPRC), 659–726 (PTDC…PKKC), 727–921 (PTPC…LPTC), 922–1073 (PGSC…IPQC), 1074–1145 (PTTC…SAQC), and 1146–1210 (PSLC…QPAC). Tyrosine 704 is modified (iodotyrosine; alternate). Tyrosine 704 carries the post-translational modification Thyroxine; alternate. Tyrosine 704 bears the Triiodothyronine; alternate mark. A Diiodotyrosine; alternate modification is found at tyrosine 704. 16 disulfides stabilise this stretch: cysteine 705/cysteine 726, cysteine 730/cysteine 763, cysteine 774/cysteine 898, cysteine 900/cysteine 921, cysteine 925/cysteine 1031, cysteine 1042/cysteine 1049, cysteine 1051/cysteine 1073, cysteine 1077/cysteine 1108, cysteine 1126/cysteine 1145, cysteine 1149/cysteine 1169, cysteine 1181/cysteine 1188, cysteine 1190/cysteine 1210, cysteine 1215/cysteine 1264, cysteine 1231/cysteine 1245, cysteine 1306/cysteine 1356, and cysteine 1331/cysteine 1347. A glycan (N-linked (GlcNAc...) asparagine) is linked at asparagine 748. Tyrosine 785 carries the iodotyrosine modification. N-linked (GlcNAc...) asparagine glycosylation occurs at asparagine 816. An Iodotyrosine; alternate modification is found at tyrosine 866. Position 866 is a diiodotyrosine; alternate (tyrosine 866). Tyrosine 883 is subject to Diiodotyrosine. An N-linked (GlcNAc...) asparagine glycan is attached at asparagine 947. Tyrosine 992 is subject to Iodotyrosine; alternate. Diiodotyrosine; alternate is present on tyrosine 992. An N-linked (GlcNAc...) asparagine glycan is attached at asparagine 1220. Tyrosine 1310 is modified (iodotyrosine). Tyrosine 1310 carries the post-translational modification Thyroxine. N-linked (GlcNAc...) asparagine glycans are attached at residues asparagine 1348, asparagine 1349, and asparagine 1365. Intrachain disulfides connect cysteine 1440-cysteine 1459, cysteine 1462-cysteine 1473, cysteine 1476-cysteine 1490, cysteine 1493-cysteine 1510, cysteine 1514-cysteine 1523, cysteine 1543-cysteine 1565, cysteine 1603-cysteine 1627, cysteine 1607-cysteine 1613, and cysteine 1639-cysteine 1662. 3 Type II repeats span residues 1456–1469 (GLGC…SYSQ), 1470–1486 (DEEC…EQAG), and 1487–1503 (SLAC…ISAG). The residue at position 1467 (tyrosine 1467) is an Iodotyrosine; alternate. Residue tyrosine 1467 is modified to Diiodotyrosine; alternate. Positions 1511–1565 (VTDCQRNEAGLQCDQNGQYRASQKDRGSGKAFCVDGEGRRLPWWETEAPLEDSQC) constitute a Thyroglobulin type-1 11 domain. The stretch at 1603 to 1723 (CLTDCTEDEA…GANLTDAHLF (121 aa)) is one Type IIIA repeat. Asparagine 1716 carries N-linked (GlcNAc...) asparagine glycosylation. Disulfide bonds link cysteine 1724-cysteine 1749, cysteine 1728-cysteine 1734, cysteine 1733-cysteine 1835, and cysteine 1760-cysteine 1777. Residues 1724 to 1892 (CLLACDRDLC…LFSAQQANLW (169 aa)) form a Type IIIB repeat. N-linked (GlcNAc...) asparagine glycans are attached at residues asparagine 1774 and asparagine 1869. Intrachain disulfides connect cysteine 1893-cysteine 1919, cysteine 1897-cysteine 1904, cysteine 1928-cysteine 1939, cysteine 1996-cysteine 2024, cysteine 2000-cysteine 2006, cysteine 2005-cysteine 2076, and cysteine 2035-cysteine 2048. One copy of the Type IIIA repeat lies at 1893 to 1995 (CLSRCVQEHS…EKSISNGFFE (103 aa)). A Type IIIB repeat occupies 1996–2129 (CERRCDADPC…TSNFSAVRDL (134 aa)). Residue asparagine 2013 is glycosylated (N-linked (GlcNAc...) asparagine). Residue asparagine 2122 is glycosylated (N-linked (GlcNAc...) asparagine). 3 disulfide bridges follow: cysteine 2130-cysteine 2154, cysteine 2134-cysteine 2140, and cysteine 2163-cysteine 2172. Residues 2130–2187 (CLSECSQHEACLITTLQTQPGAVRCMFYADTQSCTHSLQGQNCRLLLREEATHIYRKP) form a Type IIIA repeat. At tyrosine 2184 the chain carries Iodotyrosine. The segment at 2188–2768 (GISLLSYEAS…QEPGSKTYSK (581 aa)) is cholinesterase-like (ChEL). N-linked (GlcNAc...) asparagine glycosylation occurs at asparagine 2250. A disulfide bridge links cysteine 2264 with cysteine 2281. The N-linked (GlcNAc...) asparagine glycan is linked to asparagine 2295. Cysteines 2442 and 2453 form a disulfide. Tyrosine 2540 is modified (iodotyrosine). Tyrosine 2573 carries the post-translational modification Iodotyrosine; alternate. Tyrosine 2573 is subject to Thyroxine; alternate. The residue at position 2573 (tyrosine 2573) is a Triiodothyronine; alternate. Residue tyrosine 2573 is modified to Diiodotyrosine; alternate. Residue asparagine 2582 is glycosylated (N-linked (GlcNAc...) asparagine). 2 positions are modified to iodotyrosine: tyrosine 2587 and tyrosine 2617. Cysteine 2591 and cysteine 2715 are joined by a disulfide. Residue tyrosine 2697 is modified to Diiodotyrosine. The interval 2727-2768 (TSADGAKGGQSAESEEEELTAGSGLREDLLSLQEPGSKTYSK) is disordered. An O-linked (Xyl...) (chondroitin sulfate) serine glycan is attached at serine 2749. Position 2766 is an iodotyrosine; alternate (tyrosine 2766). Position 2766 is a thyroxine; alternate (tyrosine 2766). The residue at position 2766 (tyrosine 2766) is a Triiodothyronine; alternate. Tyrosine 2766 is subject to Diiodotyrosine; alternate.

It belongs to the type-B carboxylesterase/lipase family. In terms of assembly, monomer. Homodimer (via ChEL region); occurs in the endoplasmic reticulum and is required for export to the Golgi apparatus. Homooligomer; disulfide-linked; stored in this form in the thyroid follicle lumen. In terms of processing, iodinated on tyrosine residues by TPO. There are 4 pairs of iodinated tyrosines used for coupling: acceptor Tyr-24 is coupled to donor Tyr-149 or Tyr-234, acceptor Tyr-2573 is coupled to donor Tyr-2540, acceptor Tyr-2766 in monomer 1 is coupled to donor Tyr-2766 in monomer 2 and acceptor Tyr-1310 in monomer 1 is coupled to donor Tyr-108 in monomer 2. Post-translationally, sulfated tyrosines are desulfated during iodination. Undergoes sequential proteolysis by cathepsins to release thyroxine (T4) and triiodothyronine (T3) hormones. In the thyroid follicle lumen, cross-linked TG (storage form) is solubilized by limited proteolysis mediated by cathepsins CTSB and/or CTSL. Partially cleaved TG is further processed by CTSK/cathepsin K and/or CTSL resulting in the release of T4. Following endocytosis, further processing occurs leading to the release of T3 and more T4 hormones. Specifically expressed in the thyroid gland.

The protein resides in the secreted. In terms of biological role, acts as a substrate for the production of iodinated thyroid hormones thyroxine (T4) and triiodothyronine (T3). The synthesis of T3 and T4 involves iodination of selected tyrosine residues of TG/thyroglobulin followed by their oxidative coupling in the thyroid follicle lumen. Following TG re-internalization and lysosomal-mediated proteolysis, T3 and T4 are released from the polypeptide backbone leading to their secretion into the bloodstream. One dimer produces 7 thyroid hormone molecules. The protein is Thyroglobulin of Homo sapiens (Human).